The primary structure comprises 380 residues: Phosphate acyltransferase (380 aa).

A disordered region spans residues 1 to 23 (MPSPPPTPETATASDRTATPAPG).

This sequence belongs to the PlsX family. Homodimer. Probably interacts with PlsY.

It localises to the cytoplasm. It carries out the reaction a fatty acyl-[ACP] + phosphate = an acyl phosphate + holo-[ACP]. It participates in lipid metabolism; phospholipid metabolism. Catalyzes the reversible formation of acyl-phosphate (acyl-PO(4)) from acyl-[acyl-carrier-protein] (acyl-ACP). This enzyme utilizes acyl-ACP as fatty acyl donor, but not acyl-CoA. The protein is Phosphate acyltransferase of Acidiphilium cryptum (strain JF-5).